A 471-amino-acid chain; its full sequence is O-acetyltransferase astG (471 aa).

Belongs to the fumigaclavine B O-acetyltransferase family. As to quaternary structure, monomer.

The catalysed reaction is dideacetyl astellolide A + acetyl-CoA = 14-deacetyl astellolide A + CoA. It carries out the reaction dideacetyl astellolide B + acetyl-CoA = 14-deacetyl astellolide B + CoA. It functions in the pathway secondary metabolite biosynthesis; terpenoid biosynthesis. In terms of biological role, O-acetyltransferase; part of the gene cluster that mediates the biosynthesis of astellolides, drimane-type sesquiterpene esters that show antimicrobial, anti-inflammatory, and anti-tumor activities. The first step in astellolide biosynthesis is performed by the sesquiterpene cyclase astC that catalyzes the formation of drimanyl pyrophosphate from farnesyl pyrophosphate. Drimanyl pyrophosphate is then dephosphorylated by the sesquiterpene phosphatase astI to produce drimanyl monophosphate which is further dephosphorylated to drim-8-ene-11-ol by atsK. Drim-8-ene-11-ol is converted to confertifolin, probably by the cytochrome P450 monooxygenase astD and/or the dehydrogenase astE. The cytochrome P450 monooxygenases astB, astF and astJ then hydroxylate confertifolin at C6, C14, or C15 to form trihydroxy confertifolin. The nonribosomal peptide synthetase astA catalyzes ester bond formation between trihydroxy contifolin and benzoic acid (BA) or 4-hydroxy benzoic acid (4HBA), leading to the formation of dideacetyl astellolides A and B, respectively. Finally, the O-acetyltransferase astG converts dideacetyl astellolides A and B into deacetyl astellolides A and B. In Aspergillus oryzae (strain ATCC 42149 / RIB 40) (Yellow koji mold), this protein is O-acetyltransferase astG.